The sequence spans 231 residues: Orotidine 5'-phosphate decarboxylase (231 aa).

Substrate contacts are provided by residues aspartate 11, lysine 33, 60–69 (DLKFHDIPNT), threonine 120, arginine 181, glutamine 190, glycine 210, and arginine 211. The active-site Proton donor is lysine 62.

This sequence belongs to the OMP decarboxylase family. Type 1 subfamily. As to quaternary structure, homodimer.

The enzyme catalyses orotidine 5'-phosphate + H(+) = UMP + CO2. It participates in pyrimidine metabolism; UMP biosynthesis via de novo pathway; UMP from orotate: step 2/2. Its function is as follows. Catalyzes the decarboxylation of orotidine 5'-monophosphate (OMP) to uridine 5'-monophosphate (UMP). The chain is Orotidine 5'-phosphate decarboxylase from Vibrio cholerae serotype O1 (strain ATCC 39541 / Classical Ogawa 395 / O395).